The following is a 170-amino-acid chain: Adenine phosphoribosyltransferase (170 aa).

It belongs to the purine/pyrimidine phosphoribosyltransferase family. As to quaternary structure, homodimer.

The protein localises to the cytoplasm. It carries out the reaction AMP + diphosphate = 5-phospho-alpha-D-ribose 1-diphosphate + adenine. It functions in the pathway purine metabolism; AMP biosynthesis via salvage pathway; AMP from adenine: step 1/1. In terms of biological role, catalyzes a salvage reaction resulting in the formation of AMP, that is energically less costly than de novo synthesis. The chain is Adenine phosphoribosyltransferase from Oceanobacillus iheyensis (strain DSM 14371 / CIP 107618 / JCM 11309 / KCTC 3954 / HTE831).